The primary structure comprises 26 residues: MIAPIFAELAKTVGADKDGLPTLVAK.

Belongs to the thioredoxin family. Plant H-type subfamily.

Its subcellular location is the cytoplasm. Participates in various redox reactions through the reversible oxidation of the active center dithiol to a disulfide. The H form is known to activate a number of cytosolic enzymes. The protein is Thioredoxin H-type of Populus euphratica (Euphrates poplar).